Here is a 447-residue protein sequence, read N- to C-terminus: Serine--tRNA ligase (447 aa).

245-247 (TAE) contacts L-serine. Residues 276–278 (RKE) and valine 292 contribute to the ATP site. An L-serine-binding site is contributed by glutamate 299. 363–366 (ELAS) contributes to the ATP binding site. Threonine 398 serves as a coordination point for L-serine.

This sequence belongs to the class-II aminoacyl-tRNA synthetase family. Type-1 seryl-tRNA synthetase subfamily. Homodimer. The tRNA molecule binds across the dimer.

It localises to the cytoplasm. The enzyme catalyses tRNA(Ser) + L-serine + ATP = L-seryl-tRNA(Ser) + AMP + diphosphate + H(+). It catalyses the reaction tRNA(Sec) + L-serine + ATP = L-seryl-tRNA(Sec) + AMP + diphosphate + H(+). Its pathway is aminoacyl-tRNA biosynthesis; selenocysteinyl-tRNA(Sec) biosynthesis; L-seryl-tRNA(Sec) from L-serine and tRNA(Sec): step 1/1. Functionally, catalyzes the attachment of serine to tRNA(Ser). Is also able to aminoacylate tRNA(Sec) with serine, to form the misacylated tRNA L-seryl-tRNA(Sec), which will be further converted into selenocysteinyl-tRNA(Sec). This is Serine--tRNA ligase from Pyrobaculum neutrophilum (strain DSM 2338 / JCM 9278 / NBRC 100436 / V24Sta) (Thermoproteus neutrophilus).